The following is a 311-amino-acid chain: L-lactate dehydrogenase (311 aa).

Residues Val12, Asp33, Lys38, Tyr63, and 77-78 contribute to the NAD(+) site; that span reads GA. Substrate contacts are provided by residues Gln80, Arg86, and 118-121; that span reads NPVD. NAD(+) contacts are provided by residues 116–118 and Ser141; that span reads VTN. 146–149 provides a ligand contact to substrate; sequence DSAR. Positions 151 and 166 each coordinate beta-D-fructose 1,6-bisphosphate. Residue His173 is the Proton acceptor of the active site. Tyr219 carries the post-translational modification Phosphotyrosine. Thr228 is a substrate binding site.

This sequence belongs to the LDH/MDH superfamily. LDH family. As to quaternary structure, homotetramer.

It is found in the cytoplasm. It carries out the reaction (S)-lactate + NAD(+) = pyruvate + NADH + H(+). It participates in fermentation; pyruvate fermentation to lactate; (S)-lactate from pyruvate: step 1/1. Its activity is regulated as follows. Allosterically activated by fructose 1,6-bisphosphate (FBP). Catalyzes the conversion of lactate to pyruvate. In Thermoanaerobacter pseudethanolicus (strain ATCC 33223 / 39E) (Clostridium thermohydrosulfuricum), this protein is L-lactate dehydrogenase.